The chain runs to 295 residues: Protease HtpX (295 aa).

Transmembrane regions (helical) follow at residues 4–24 (IFLF…VLRL) and 42–62 (ALLI…LAIS). H147 serves as a coordination point for Zn(2+). E148 is an active-site residue. H151 contributes to the Zn(2+) binding site. Helical transmembrane passes span 155–175 (GDMV…IFLA) and 197–217 (FWIT…IIVM). Zn(2+) is bound at residue E224.

Belongs to the peptidase M48B family. The cofactor is Zn(2+).

It localises to the cell inner membrane. The polypeptide is Protease HtpX (Thioalkalivibrio sulfidiphilus (strain HL-EbGR7)).